A 94-amino-acid chain; its full sequence is Translation initiation factor IF-1 (94 aa).

The S1-like domain maps to M1–K72. The segment at H71–R94 is disordered.

It belongs to the IF-1 family. In terms of assembly, component of the 30S ribosomal translation pre-initiation complex which assembles on the 30S ribosome in the order IF-2 and IF-3, IF-1 and N-formylmethionyl-tRNA(fMet); mRNA recruitment can occur at any time during PIC assembly.

The protein resides in the cytoplasm. Functionally, one of the essential components for the initiation of protein synthesis. Stabilizes the binding of IF-2 and IF-3 on the 30S subunit to which N-formylmethionyl-tRNA(fMet) subsequently binds. Helps modulate mRNA selection, yielding the 30S pre-initiation complex (PIC). Upon addition of the 50S ribosomal subunit IF-1, IF-2 and IF-3 are released leaving the mature 70S translation initiation complex. In Rhodopseudomonas palustris (strain HaA2), this protein is Translation initiation factor IF-1.